The sequence spans 260 residues: Snake venom serine proteinase 12 (260 aa).

Residues 1–18 (MVLIRVLANLLILQLSYA) form the signal peptide. Positions 19–24 (QKSSEL) are excised as a propeptide. One can recognise a Peptidase S1 domain in the interval 25-251 (VIGGDECNIN…HLDWIQSIIA (227 aa)). 6 cysteine pairs are disulfide-bonded: C31-C163, C50-C66, C98-C258, C142-C212, C174-C191, and C202-C227. The active-site Charge relay system is H65. Residue N103 is glycosylated (N-linked (GlcNAc...) asparagine). D110 (charge relay system) is an active-site residue. S206 acts as the Charge relay system in catalysis.

It belongs to the peptidase S1 family. Snake venom subfamily. As to quaternary structure, monomer. In terms of tissue distribution, expressed by the venom gland.

It localises to the secreted. Its function is as follows. Snake venom serine protease that may act in the hemostasis system of the prey. The chain is Snake venom serine proteinase 12 from Crotalus adamanteus (Eastern diamondback rattlesnake).